A 295-amino-acid chain; its full sequence is UDP-N-acetylenolpyruvoylglucosamine reductase (295 aa).

The 164-residue stretch at 26–189 (VGGQADILFK…IEAEFKGVSS (164 aa)) folds into the FAD-binding PCMH-type domain. R169 is an active-site residue. The active-site Proton donor is the C218. Residue E288 is part of the active site.

The protein belongs to the MurB family. Requires FAD as cofactor.

Its subcellular location is the cytoplasm. The catalysed reaction is UDP-N-acetyl-alpha-D-muramate + NADP(+) = UDP-N-acetyl-3-O-(1-carboxyvinyl)-alpha-D-glucosamine + NADPH + H(+). The protein operates within cell wall biogenesis; peptidoglycan biosynthesis. Cell wall formation. This chain is UDP-N-acetylenolpyruvoylglucosamine reductase, found in Wolbachia sp. subsp. Brugia malayi (strain TRS).